A 544-amino-acid chain; its full sequence is Chaperonin GroEL (544 aa).

Residues 30–33 (TLGP), Lys-51, 87–91 (DGTTT), Gly-415, and Asp-495 each bind ATP.

Belongs to the chaperonin (HSP60) family. Forms a cylinder of 14 subunits composed of two heptameric rings stacked back-to-back. Interacts with the co-chaperonin GroES.

It is found in the cytoplasm. It catalyses the reaction ATP + H2O + a folded polypeptide = ADP + phosphate + an unfolded polypeptide.. Together with its co-chaperonin GroES, plays an essential role in assisting protein folding. The GroEL-GroES system forms a nano-cage that allows encapsulation of the non-native substrate proteins and provides a physical environment optimized to promote and accelerate protein folding. The chain is Chaperonin GroEL from Bartonella bacilliformis (strain ATCC 35685 / KC583 / Herrer 020/F12,63).